We begin with the raw amino-acid sequence, 229 residues long: Coiled-coil domain-containing protein 134 (229 aa).

Positions 1–22 (MDPVQLLSFLLALLLPLGTALD) are cleaved as a signal peptide. A coiled-coil region spans residues 192 to 218 (NTDAFQKALREEEKRRRKEEKRKEIRK). The tract at residues 201 to 229 (REEEKRRRKEEKRKEIRKGPRITRSRSEL) is disordered. Basic residues predominate over residues 219–229 (GPRITRSRSEL). The Prevents secretion from ER motif lies at 226 to 229 (RSEL).

The protein belongs to the CCDC134 family.

It localises to the endoplasmic reticulum lumen. Molecular adapter required to prevent protein hyperglycosylation of HSP90B1: during translation, associates with nascent HSP90B1 and the STT3A catalytic component of the OST-A complex and tethers them to a specialized translocon that forms a microenvironment for HSP90B1 folding. In the CCDC134-containing translocon, STT3A associates with the SRT pseudosubstrate motif of HSP90B1, preventing access to facultative glycosylation sites until folding is completed, preventing hyperglycosylation and subsequent degradation of HSP90B1. This Xenopus tropicalis (Western clawed frog) protein is Coiled-coil domain-containing protein 134 (ccdc134).